The sequence spans 143 residues: Nucleoside diphosphate kinase (143 aa).

Residues Lys-11, Phe-59, Arg-87, Thr-93, Arg-104, and Asn-114 each contribute to the ATP site. The active-site Pros-phosphohistidine intermediate is His-117.

Belongs to the NDK family. As to quaternary structure, homotetramer. Requires Mg(2+) as cofactor.

Its subcellular location is the cytoplasm. The enzyme catalyses a 2'-deoxyribonucleoside 5'-diphosphate + ATP = a 2'-deoxyribonucleoside 5'-triphosphate + ADP. It carries out the reaction a ribonucleoside 5'-diphosphate + ATP = a ribonucleoside 5'-triphosphate + ADP. Functionally, major role in the synthesis of nucleoside triphosphates other than ATP. The ATP gamma phosphate is transferred to the NDP beta phosphate via a ping-pong mechanism, using a phosphorylated active-site intermediate. The chain is Nucleoside diphosphate kinase from Erwinia tasmaniensis (strain DSM 17950 / CFBP 7177 / CIP 109463 / NCPPB 4357 / Et1/99).